A 168-amino-acid polypeptide reads, in one-letter code: MSSQQYQQQRRKFAAAFLALIFILAAVDTAEAGKKEKPEKKVKKSDCGEWQWSVCVPTSGDCGLGTREGTRTGAECKQTMKTQRCKIPCNWKKQFGAECKYQFQAWGECDLNTALKTRTGSLKRALHNADCQKTVTISKPCGKLTKPKPQAESKKKKKEGKKQEKMLD.

The signal sequence occupies residues 1–32; it reads MSSQQYQQQRRKFAAAFLALIFILAAVDTAEA. Cystine bridges form between cysteine 47-cysteine 76, cysteine 55-cysteine 85, cysteine 62-cysteine 89, cysteine 99-cysteine 131, and cysteine 109-cysteine 141. 2 chondroitin sulfate binding regions span residues 92 to 99 and 123 to 131; these read KKQFGAEC and KRALHNADC. A disordered region spans residues 139–168; the sequence is KPCGKLTKPKPQAESKKKKKEGKKQEKMLD. Positions 147–168 are chondroitin sulfate A binding; it reads PKPQAESKKKKKEGKKQEKMLD.

The protein belongs to the pleiotrophin family. Interacts with ALK and NEK6. Interacts with PTPRZ1 (via chondroitin sulfate groups); promotes formation of homooligomers; oligomerization impairs tyrosine phosphatase activity. Forms a complex with PTPRZ1 and CTNNB1; this complex inactivates PTPRZ1 protein tyrosine phosphatase activity through PTN interaction and stimulates tyrosine phosphorylation of CTNNB1. Interacts with ITGB3 and ITGA5. Forms a complex with PTPRZ1 and integrin alpha-V/beta-3 (ITGAV:ITGB3) that stimulates endothelial cell migration through ITGB3 'Tyr-773' phosphorylation. Interacts with SDC3 (via heparan sulfate chains); this interaction mediates the neurite outgrowth-promoting signal from PTN to the cytoskeleton of growing neurites; this interaction mediates osteoblast recruitment. Interacts with GPC2 (via heparan sulfate); this interaction promotes neurite outgrowth through binding of PTN with chondroitin sulfate of proteoglycans, thereby releasing PTPRS of chondroitin sulfate proteoglycans (CSPGs) and leading to binding with heparan sulfate of GPC2. Post-translationally, phosphorylated by NEK6. Osteoblast and brain. Expressed in the follicular epithelium and granulosa cells of the ovary. Strongly expressed in the uterus of newborn mice, and the degree of expression decreased in one-week-old mice, although the expression continues even in the uteri of adult mice. Expression gradually increases from proestrus to estrus, then decreases sharply, and thereafter gradually increased again. strongly expressed in the cochlea of WT mice 1 week after birth, and then the expression decreased and was undetectable by week 8 after birth. Expressed around the cell soma of osteocytes and apparently captured in the unmineralized interstitial matrix surrounding the cells. Furthermore distributed throughout the intraosseous canalicular porosity, being localized in the unmineralized matrix around the cell processes. Strongly expressed in the innermost layer of the periosteum.

It is found in the secreted. Secreted growth factor that mediates its signal through cell-surface proteoglycan and non-proteoglycan receptors. Binds cell-surface proteoglycan receptor via their chondroitin sulfate (CS) groups. Thereby regulates many processes like cell proliferation, cell survival, cell growth, cell differentiation and cell migration in several tissues namely neuron and bone. Also plays a role in synaptic plasticity and learning-related behavior by inhibiting long-term synaptic potentiation. Binds PTPRZ1, leading to neutralization of the negative charges of the CS chains of PTPRZ1, inducing PTPRZ1 clustering, thereby causing the dimerization and inactivation of its phosphatase activity leading to increased tyrosine phosphorylation of each of the PTPRZ1 substrates like ALK or AFAP1L2 in order to activate the PI3K-AKT pathway. Through PTPRZ1 binding controls oligodendrocyte precursor cell differentiation by enhancing the phosphorylation of AFAP1L2 in order to activate the PI3K-AKT pathway. Forms a complex with PTPRZ1 and integrin alpha-V/beta-3 (ITGAV:ITGB3) that stimulates endothelial cell migration through SRC dephosphorylation and activation that consequently leads to ITGB3 'Tyr-773' phosphorylation. In adult hippocampus promotes dendritic arborization, spine development, and functional integration and connectivity of newborn granule neurons through ALK by activating AKT signaling pathway. Binds GPC2 and chondroitin sulfate proteoglycans (CSPGs) at the neuron surface, leading to abrogation of binding between PTPRS and CSPGs and neurite outgrowth promotion. Binds SDC3 and mediates bone formation by recruiting and attaching osteoblasts/osteoblast precursors to the sites for new bone deposition. Binds ALK and promotes cell survival and cell proliferation through MAPK pathway activation. Inhibits proliferation and enhances differentiation of neural stem cells by inhibiting FGF2-induced fibroblast growth factor receptor signaling pathway. Mediates regulatory mechanisms in normal hemostasis and in hematopoietic regeneration and in maintaining the balance of myeloid and lymphoid regeneration. In addition may play a role in the female reproductive system, auditory response and the progesterone-induced decidualization pathway. The sequence is that of Pleiotrophin from Mus musculus (Mouse).